We begin with the raw amino-acid sequence, 263 residues long: UPF0739 protein C1orf74 homolog (263 aa).

This sequence belongs to the UPF0739 family.

The sequence is that of UPF0739 protein C1orf74 homolog from Xenopus tropicalis (Western clawed frog).